The sequence spans 517 residues: MAIRLNPKVRRFLLDKCRQKRYGFLFLGCIFAILYCMGTWPFFAKDIVHDPNNLPYSLQDYSTDKDEPFFRGCTDTKLYLQNPAYSKMNASFVMLTRNEEIEDVLKTMRSIEGHFNKWFKYPYVFLNDDPFTDHFKDQIQAATNATVEFGTVDEIMWEFPAKVRNSLQFKASLEDQNDRGIMYGNMESYHKMCRFYSGIFYKHPLVSKYEWYWRIEPDVDFFCDISYDPFFEMAKHNKKYGFTVLITELYWTVPNLFRTTKSFIKKTAGLKENLGTLWKLFTFNYNILDTDDEEISRWVNFPWDAKPKLTEKLMVDFLLENHGQVNNEEDLEGIQYLVERARSKVPMLEDSLEGEDYNLCHFWSNFEIARVDLFDNEIYNAYFKFLEESGGFWTERWGDAPIHSIGLGMTLDLEDVHYFRDIGYRHSSLQHCPKNALQSQENLNTFDEGYNFGCGCRCVCPKKGEDIEDHSTPCMDIFFELLHGREYEKEFPGCYKPSIKDKDVIEEIRRENFRVIE.

Over 1–23 the chain is Cytoplasmic; it reads MAIRLNPKVRRFLLDKCRQKRYG. The helical; Signal-anchor for type II membrane protein transmembrane segment at 24-44 threads the bilayer; the sequence is FLFLGCIFAILYCMGTWPFFA. The stem region stretch occupies residues 45–85; sequence KDIVHDPNNLPYSLQDYSTDKDEPFFRGCTDTKLYLQNPAY. Residues 45-517 lie on the Lumenal side of the membrane; that stretch reads KDIVHDPNNL…IRRENFRVIE (473 aa). Residues 86 to 517 are catalytic; it reads SKMNASFVML…IRRENFRVIE (432 aa). N-linked (GlcNAc...) asparagine glycosylation is found at Asn89 and Asn144. Glu367 functions as the Nucleophile in the catalytic mechanism.

The protein belongs to the glycosyltransferase 15 family.

The protein resides in the membrane. Functionally, possible glycosyltransferase that transfers an alpha-D-mannosyl residue from GDP-mannose into lipid-linked oligosaccharide, forming an alpha-(1-&gt;2)-D-mannosyl-D-mannose linkage. The chain is Probable mannosyltransferase KTR7 (KTR7) from Saccharomyces cerevisiae (strain ATCC 204508 / S288c) (Baker's yeast).